Consider the following 295-residue polypeptide: Ribosomal RNA small subunit methyltransferase A (295 aa).

The S-adenosyl-L-methionine site is built by N40, V42, G67, E88, D118, and N135.

It belongs to the class I-like SAM-binding methyltransferase superfamily. rRNA adenine N(6)-methyltransferase family. RsmA subfamily.

It localises to the cytoplasm. It catalyses the reaction adenosine(1518)/adenosine(1519) in 16S rRNA + 4 S-adenosyl-L-methionine = N(6)-dimethyladenosine(1518)/N(6)-dimethyladenosine(1519) in 16S rRNA + 4 S-adenosyl-L-homocysteine + 4 H(+). Specifically dimethylates two adjacent adenosines (A1518 and A1519) in the loop of a conserved hairpin near the 3'-end of 16S rRNA in the 30S particle. May play a critical role in biogenesis of 30S subunits. The protein is Ribosomal RNA small subunit methyltransferase A of Arthrobacter sp. (strain FB24).